A 272-amino-acid polypeptide reads, in one-letter code: Shikimate dehydrogenase (NADP(+)) (272 aa).

Shikimate is bound by residues 14–16 (SKS) and threonine 61. Lysine 65 functions as the Proton acceptor in the catalytic mechanism. Position 77 (glutamate 77) interacts with NADP(+). The shikimate site is built by asparagine 86 and aspartate 102. Residues 126-130 (GAGGA), 150-155 (NRTFSK), and methionine 213 each bind NADP(+). A shikimate-binding site is contributed by tyrosine 215. Glycine 237 serves as a coordination point for NADP(+).

Belongs to the shikimate dehydrogenase family. In terms of assembly, homodimer.

The catalysed reaction is shikimate + NADP(+) = 3-dehydroshikimate + NADPH + H(+). Its pathway is metabolic intermediate biosynthesis; chorismate biosynthesis; chorismate from D-erythrose 4-phosphate and phosphoenolpyruvate: step 4/7. Its function is as follows. Involved in the biosynthesis of the chorismate, which leads to the biosynthesis of aromatic amino acids. Catalyzes the reversible NADPH linked reduction of 3-dehydroshikimate (DHSA) to yield shikimate (SA). The protein is Shikimate dehydrogenase (NADP(+)) of Psychromonas ingrahamii (strain DSM 17664 / CCUG 51855 / 37).